Reading from the N-terminus, the 106-residue chain is UPF0145 protein Tlet_1264 (106 aa).

The protein belongs to the UPF0145 family.

The chain is UPF0145 protein Tlet_1264 from Pseudothermotoga lettingae (strain ATCC BAA-301 / DSM 14385 / NBRC 107922 / TMO) (Thermotoga lettingae).